The sequence spans 1006 residues: Transcription factor tau subunit sfc4 (1006 aa).

A disordered region spans residues 64–91 (GLWSDEESDYEGSDDESNFSKTASRTED). The segment covering 66 to 80 (WSDEESDYEGSDDES) has biased composition (acidic residues). TPR repeat units lie at residues 133-166 (QQMLSLANHLFAQEGNFDEAQKLAEEIVRIDNNV), 205-238 (HELWFTCAKLSESLEFWDQADYCYNRAVSAKPPN), 277-310 (ASILKNLAEIYIKIHAPREILKQFEIAWKYFYQY), 396-429 (HLFRTKLGIARLKTGELPEAELHFSVIKNLPPDY), 431-464 (WGMLYDIAKAYMDIERLDLALEYFVLICNHEPAQ), and 466-499 (IGLWYNMGVCYLELKEYEHAQQCMEAILIVDNSN). Residues 506–554 (LAEINELQDNRDAALEIVTNIFEQRRNINELEREQSQNEDHEKNVGSQL) are a coiled coil. TPR repeat units lie at residues 841–874 (PVLVLLYGHIMARNRSWIPAINYYSRAFAINPDC) and 924–957 (QEALYNLGKAYHFIGLEHYAVKYYEAVLGLSPMS).

In terms of assembly, component of the TFIIIC complex including sfc1, sfc3, sfc4, sfc6 and sfc7. The subunits are organized in two globular domains, tauA and tauB, connected by a proteolysis-sensitive and flexible linker. Interacts with sfc1, sfc3 and sfc6. In terms of processing, phosphorylated.

It is found in the nucleus. Functionally, TFIIIC mediates tRNA and 5S RNA gene activation by binding to intragenic promoter elements. Upstream of the transcription start site, TFIIIC assembles the initiation complex TFIIIB-TFIIIC-tDNA, which is sufficient for RNA polymerase III recruitment and function. Part of the tauA domain of TFIIIC that binds boxA DNA promoter sites of tRNA and similar genes. Sfc4 is the TFIIIB assembling subunit of TFIIIC. The sequence is that of Transcription factor tau subunit sfc4 from Schizosaccharomyces pombe (strain 972 / ATCC 24843) (Fission yeast).